A 286-amino-acid polypeptide reads, in one-letter code: Transcriptional regulator of yeast form adherence 4 (286 aa).

2 stretches are compositionally biased toward low complexity: residues 1 to 29 (MSLP…PPSS) and 37 to 65 (LSTS…TTTN). The interval 1–71 (MSLPMSPVSP…TTTNYGTKTP (71 aa)) is disordered. C2H2-type zinc fingers lie at residues 78–101 (FNCT…LSTH) and 107–130 (FTCG…KNLH). The tract at residues 146-260 (HCNKDNDSKS…ITNSSTSHIH (115 aa)) is disordered. Composition is skewed to low complexity over residues 156–165 (GSDSNTNKTN) and 228–244 (SVPS…PTST). The segment covering 245-260 (NNDTASITNSSTSHIH) has biased composition (polar residues).

It localises to the nucleus. In terms of biological role, transcription factor required for yeast cell adherence to silicone substrate. In Candida albicans (strain SC5314 / ATCC MYA-2876) (Yeast), this protein is Transcriptional regulator of yeast form adherence 4 (TRY4).